Reading from the N-terminus, the 216-residue chain is Probable GTP-binding protein EngB (216 aa).

An EngB-type G domain is found at 24 to 205 (QTPELAFVGR…WARIASAATD (182 aa)). GTP is bound by residues 32–39 (GRSNVGKS), 59–63 (GRTRA), 86–89 (DLPG), 153–156 (TKMD), and 184–186 (FSA). Residues S39 and T61 each contribute to the Mg(2+) site.

It belongs to the TRAFAC class TrmE-Era-EngA-EngB-Septin-like GTPase superfamily. EngB GTPase family. Mg(2+) is required as a cofactor.

Necessary for normal cell division and for the maintenance of normal septation. In Anaeromyxobacter sp. (strain Fw109-5), this protein is Probable GTP-binding protein EngB.